We begin with the raw amino-acid sequence, 148 residues long: Large ribosomal subunit protein bL9 (148 aa).

The protein belongs to the bacterial ribosomal protein bL9 family.

Functionally, binds to the 23S rRNA. The polypeptide is Large ribosomal subunit protein bL9 (Chromohalobacter salexigens (strain ATCC BAA-138 / DSM 3043 / CIP 106854 / NCIMB 13768 / 1H11)).